We begin with the raw amino-acid sequence, 104 residues long: Large ribosomal subunit protein cL38 (104 aa).

The N-terminal 39 residues, 1–39, are a transit peptide targeting the chloroplast; sequence MASVSSIFGCGVSMAPNSSLRNKAIRTERRSACGGLLIE. A disordered region spans residues 42-76; the sequence is SRPQKKSTAHHMKTRPRKSRLSDRNRKPTVYAPLP. Basic residues predominate over residues 44–60; that stretch reads PQKKSTAHHMKTRPRKS.

It belongs to the chloroplast-specific ribosomal protein cL38 family. In terms of assembly, part of the 50S ribosomal subunit.

It localises to the plastid. The protein resides in the chloroplast. The chain is Large ribosomal subunit protein cL38 (PSRP6) from Pisum sativum (Garden pea).